The chain runs to 675 residues: MFCKEEEPYEFPENTFGTNELLPNYQQNCTDGEAISDTKSDLAYLEVEITDAHEESNTDKPFTCTECGKTFTRKPNYESHIRAHKGEKPFSCMVCDKAFAWKSNLLVHYSVHSGEKPFSCTECDKTFSNKAQLEKHLRVHTGEKPYSCEQCGKSFAHKCVLDSHQRTHTGDKPFSCTECGKKFSQRGNLHKHLKTHKLDQPHLCAECGKTFSFKSTLLEHQKIHSEIRPLSEFGKTFSDAHNLLKHQSTFTEEQKPFPCTECGEIFSNEHELLTHQSTHTEEQKPFPCTKCWGIFSNEHELRTHQSTHTEGQKSLPSTESGGTFSNEHELLTHQSTHTEEQKHLPCTECGGTFTNEQELLAHQSTHTEEQKPLPCTECGEIFSDEHELLTHQSTHTSPSTEFGVQTTEDNHQSPSKDHTGEKPFSCSECGKSFFYKSVLKDHLVVHTGKKPYHCIECGRSYTHQSSLKSHQRTHTGVKAFSCNLCDKLSIISKLRLHYRVHSGEKPYPCTECDKTFTKKEQLESHYKVHTGEKPYPCQQCGKSFSHKSVLKLHLRTHTGDKPFSCTECGKTFTRKPNYESHLTTHTGKKPFSCTECGKEFAWKRNLEAHYKMHTGEKPFTCTECGKTFTWKSNLRSHYTTVHGISPIQYACTEEDVNVIKTEEGDSFSYMVTLEN.

10 consecutive C2H2-type zinc fingers follow at residues 62–84 (FTCT…IRAH), 90–112 (FSCM…YSVH), 118–140 (FSCT…LRVH), 146–168 (YSCE…QRTH), 174–196 (FSCT…LKTH), 202–224 (HLCA…QKIH), 257–279 (FPCT…QSTH), 286–308 (FPCT…QSTH), 344–366 (LPCT…QSTH), and 373–395 (LPCT…QSTH). The tract at residues 302–325 (RTHQSTHTEGQKSLPSTESGGTFS) is disordered. A compositionally biased stretch (polar residues) spans 304–325 (HQSTHTEGQKSLPSTESGGTFS). Residues 390-407 (THQSTHTSPSTEFGVQTT) are compositionally biased toward polar residues. A disordered region spans residues 390-423 (THQSTHTSPSTEFGVQTTEDNHQSPSKDHTGEKP). Basic and acidic residues predominate over residues 408–421 (EDNHQSPSKDHTGE). C2H2-type zinc fingers lie at residues 424 to 446 (FSCS…LVVH), 452 to 474 (YHCI…QRTH), 480 to 501 (FSCN…YRVH), 507 to 529 (YPCT…YKVH), 535 to 557 (YPCQ…LRTH), 563 to 585 (FSCT…LTTH), 591 to 613 (FSCT…YKMH), and 619 to 642 (FTCT…TTVH).

It belongs to the krueppel C2H2-type zinc-finger protein family.

Its subcellular location is the nucleus. May be involved in transcriptional regulation. The sequence is that of Gastrula zinc finger protein xFG20-1 from Xenopus laevis (African clawed frog).